A 96-amino-acid polypeptide reads, in one-letter code: Co-chaperonin GroES (96 aa).

Belongs to the GroES chaperonin family. As to quaternary structure, heptamer of 7 subunits arranged in a ring. Interacts with the chaperonin GroEL.

The protein resides in the cytoplasm. Functionally, together with the chaperonin GroEL, plays an essential role in assisting protein folding. The GroEL-GroES system forms a nano-cage that allows encapsulation of the non-native substrate proteins and provides a physical environment optimized to promote and accelerate protein folding. GroES binds to the apical surface of the GroEL ring, thereby capping the opening of the GroEL channel. The protein is Co-chaperonin GroES of Acinetobacter baylyi (strain ATCC 33305 / BD413 / ADP1).